A 689-amino-acid chain; its full sequence is Acetyl-coenzyme A synthetase 2-like, mitochondrial (689 aa).

A mitochondrion-targeting transit peptide spans 1-37 (MAARTLGRGVGRLLGSLRGLSGQPARPPCGVSAPRRA). Residues 17-46 (LRGLSGQPARPPCGVSAPRRAASGPSGSAP) form a disordered region. Low complexity predominate over residues 32-46 (SAPRRAASGPSGSAP). CoA-binding positions include 224 to 227 (RGGR) and threonine 341. The residue at position 396 (lysine 396) is an N6-acetyllysine. Residues 417 to 419 (GEP), 441 to 446 (DTWWQT), aspartate 533, and arginine 548 contribute to the ATP site. A CoA-binding site is contributed by serine 556. Arginine 559 contacts ATP. An N6-acetyllysine modification is found at lysine 642.

Belongs to the ATP-dependent AMP-binding enzyme family. As to quaternary structure, interacts with SIRT3. In terms of processing, reversibly acetylated on Lys-642. The acetyl-CoA synthase activity is inhibited by acetylation and activated by deacetylation mediated by the deacetylase SIRT3.

The protein localises to the mitochondrion matrix. It carries out the reaction acetate + ATP + CoA = acetyl-CoA + AMP + diphosphate. It catalyses the reaction propanoate + ATP + CoA = propanoyl-CoA + AMP + diphosphate. Its activity is regulated as follows. Inhibited by acetylation at Lys-642 and activated by deacetylation mediated by the deacetylase SIRT3. In terms of biological role, catalyzes the synthesis of acetyl-CoA from short-chain fatty acids. Acetate is the preferred substrate. Can also utilize propionate with a much lower affinity. Provides acetyl-CoA that is utilized mainly for oxidation under ketogenic conditions. Involved in thermogenesis under ketogenic conditions, using acetate as a vital fuel when carbohydrate availability is insufficient. This chain is Acetyl-coenzyme A synthetase 2-like, mitochondrial (ACSS1), found in Homo sapiens (Human).